Consider the following 354-residue polypeptide: Homeobox-leucine zipper protein HOX27 (354 aa).

The tract at residues 98 to 175 (SVAAGAPGME…DDEGASARKK (78 aa)) is disordered. Residues 148-157 (QGGGGGGGGE) are compositionally biased toward gly residues. A DNA-binding region (homeobox) is located at residues 171-230 (SARKKLRLSKEQSAFLEESFKEHSTLNPKQKVALAKQLNLRPRQVEVWFQNRRARTKLKQ). A leucine-zipper region spans residues 229–273 (KQTEVDCEYLKRCCETLTEENRRLHKELAELRALKTARPFYMHLP). Positions 294 to 323 (STSAPAAATSPAAAPTAAARTAVASPEPHR) are disordered.

This sequence belongs to the HD-ZIP homeobox family. Class II subfamily. As to expression, expressed in seedlings, roots, stems, leaf sheaths and blades and panicles.

It localises to the nucleus. Probable transcription factor. This chain is Homeobox-leucine zipper protein HOX27 (HOX27), found in Oryza sativa subsp. indica (Rice).